The following is a 1102-amino-acid chain: MPKRTDIQSVLVIGSGPIVIGQAAEFDYSGTQACRILRAEGLRVILVNSNPATIMTDPEIADATYVEPITPEFVEKIIAKERPDALLPTLGGQTALNTAISMHEQGVLEKYGVELIGANVEAINKGEDRDLFKGVVEAVRAKIGHGESARSVICHSMDDVLEGVETLGGYPVVVRPSFTMGGAGSGFAHDEEELRRIAGQGLTLSPTTEVLLEESILGWKEYELELMRDKNDNVVVVCSIENFDPMGVHTGDSITVAPSMTLTDREYQRLRDIGIAIIREVGVDTGGCNIQFAVNPDDGRIIVIEMNPRVSRSSALASKATGFPIAKIAAKLAVGYTLDEIPNDITEKTPASFEPTLDYVVVKAPRFAFEKFPSADSTLTTTMKSVGEAMAIGRNFTEALQKALRSLEKKGSQFTFVGEPGDKALLLEEAVRPTDGRINSVMQAIRAGATPEEVFEATKIDPWFVDQLFLIKELADELAAADKLDPELLAEAKRHGFSDVQIAEIRGLREDVVREVRHALGVRPVYKTVDTCAAEFAAKTPYFYSSYDEESEVAPREKPAVIILGSGPNRIGQGIEFDYSCVHASFALSEAGYETVMVNCNPETVSTDYDTSDRLYFEPLTLEDVLEIVHAETLAGPVAGVIVQLGGQTPLGLSQALKDNGVPVVGTPPEAIHAAEDRGAFGQVLAEAGLPAPKHGTATTFAGAKAIADEIGYPVLVRPSYVLGGRGMEIVYDETRLESYIAESTEISPSRPVLVDRFLDDAIEIDVDALYDGEELYLGGVMEHIEEAGIHSGDSACALPPITLGGFDIKRLRASTEAIAKGVGVRGLINIQFAMAGDILYVLEANPRASRTVPFTSKATAVPLAKAAARISLGATIAELRAERLLPANGDGGTLPLDAPISVKEAVMPWSRFRDIHGRGVDTVLGPEMRSTGEVMGIDSVFGTAYAKSQAGAYGPLPTKGRAFISVANRDKRSMIFPARELVAHGFELLATSGTAEVLKRNGINATVVRKQSEGEGPGGEKTIVQLIHDGQVDLIVNTPYGTGGRLDGYEIRTAAVARSVPCLTTVQALAAAVQGIDALTHGDVGVRSLQEHAEHLTAARD.

Positions 1–408 (MPKRTDIQSV…ALQKALRSLE (408 aa)) are carboxyphosphate synthetic domain. Residues Arg-129, Arg-175, Gly-181, Gly-182, Glu-214, Ile-216, Glu-221, Gly-247, Val-248, His-249, Gln-291, and Glu-305 each coordinate ATP. The 197-residue stretch at 138–334 (AVRAKIGHGE…IAKIAAKLAV (197 aa)) folds into the ATP-grasp 1 domain. Residues Gln-291, Glu-305, and Asn-307 each contribute to the Mg(2+) site. The Mn(2+) site is built by Gln-291, Glu-305, and Asn-307. The interval 409–551 (KKGSQFTFVG…YFYSSYDEES (143 aa)) is oligomerization domain. Positions 552–954 (EVAPREKPAV…AYAKSQAGAY (403 aa)) are carbamoyl phosphate synthetic domain. One can recognise an ATP-grasp 2 domain in the interval 682 to 873 (GQVLAEAGLP…LAKAAARISL (192 aa)). ATP-binding residues include Arg-718, Arg-757, Leu-759, Glu-764, Gly-789, Ile-790, His-791, Ser-792, Gln-832, and Glu-844. Mg(2+) contacts are provided by Gln-832, Glu-844, and Asn-846. Mn(2+)-binding residues include Gln-832, Glu-844, and Asn-846. The MGS-like domain occupies 955-1100 (GPLPTKGRAF…QEHAEHLTAA (146 aa)). Residues 955-1102 (GPLPTKGRAF…HAEHLTAARD (148 aa)) form an allosteric domain region.

The protein belongs to the CarB family. As to quaternary structure, composed of two chains; the small (or glutamine) chain promotes the hydrolysis of glutamine to ammonia, which is used by the large (or ammonia) chain to synthesize carbamoyl phosphate. Tetramer of heterodimers (alpha,beta)4. The cofactor is Mg(2+). It depends on Mn(2+) as a cofactor.

It catalyses the reaction hydrogencarbonate + L-glutamine + 2 ATP + H2O = carbamoyl phosphate + L-glutamate + 2 ADP + phosphate + 2 H(+). The enzyme catalyses hydrogencarbonate + NH4(+) + 2 ATP = carbamoyl phosphate + 2 ADP + phosphate + 2 H(+). The protein operates within amino-acid biosynthesis; L-arginine biosynthesis; carbamoyl phosphate from bicarbonate: step 1/1. It functions in the pathway pyrimidine metabolism; UMP biosynthesis via de novo pathway; (S)-dihydroorotate from bicarbonate: step 1/3. In terms of biological role, large subunit of the glutamine-dependent carbamoyl phosphate synthetase (CPSase). CPSase catalyzes the formation of carbamoyl phosphate from the ammonia moiety of glutamine, carbonate, and phosphate donated by ATP, constituting the first step of 2 biosynthetic pathways, one leading to arginine and/or urea and the other to pyrimidine nucleotides. The large subunit (synthetase) binds the substrates ammonia (free or transferred from glutamine from the small subunit), hydrogencarbonate and ATP and carries out an ATP-coupled ligase reaction, activating hydrogencarbonate by forming carboxy phosphate which reacts with ammonia to form carbamoyl phosphate. In Streptomyces avermitilis (strain ATCC 31267 / DSM 46492 / JCM 5070 / NBRC 14893 / NCIMB 12804 / NRRL 8165 / MA-4680), this protein is Carbamoyl phosphate synthase large chain.